We begin with the raw amino-acid sequence, 438 residues long: GTPase Obg (438 aa).

An Obg domain is found at Asn-2 to Leu-160. Residues Ala-161–Asp-337 enclose the OBG-type G domain. GTP contacts are provided by residues Gly-167–Ser-174, Phe-192–Thr-196, Asp-214–Gly-217, Thr-284–Asp-287, and Ser-318–Val-320. Residues Ser-174 and Thr-194 each coordinate Mg(2+). Residues Pro-360–Gln-438 enclose the OCT domain.

This sequence belongs to the TRAFAC class OBG-HflX-like GTPase superfamily. OBG GTPase family. Monomer. Mg(2+) serves as cofactor.

It is found in the cytoplasm. Functionally, an essential GTPase which binds GTP, GDP and possibly (p)ppGpp with moderate affinity, with high nucleotide exchange rates and a fairly low GTP hydrolysis rate. Plays a role in control of the cell cycle, stress response, ribosome biogenesis and in those bacteria that undergo differentiation, in morphogenesis control. This chain is GTPase Obg, found in Limosilactobacillus reuteri (strain DSM 20016) (Lactobacillus reuteri).